Consider the following 205-residue polypeptide: ATP-dependent Clp protease proteolytic subunit (205 aa).

The active-site Nucleophile is the Ser-107. His-132 is an active-site residue.

It belongs to the peptidase S14 family. In terms of assembly, fourteen ClpP subunits assemble into 2 heptameric rings which stack back to back to give a disk-like structure with a central cavity, resembling the structure of eukaryotic proteasomes.

Its subcellular location is the cytoplasm. The enzyme catalyses Hydrolysis of proteins to small peptides in the presence of ATP and magnesium. alpha-casein is the usual test substrate. In the absence of ATP, only oligopeptides shorter than five residues are hydrolyzed (such as succinyl-Leu-Tyr-|-NHMec, and Leu-Tyr-Leu-|-Tyr-Trp, in which cleavage of the -Tyr-|-Leu- and -Tyr-|-Trp bonds also occurs).. Functionally, cleaves peptides in various proteins in a process that requires ATP hydrolysis. Has a chymotrypsin-like activity. Plays a major role in the degradation of misfolded proteins. This is ATP-dependent Clp protease proteolytic subunit from Pseudoalteromonas translucida (strain TAC 125).